The primary structure comprises 287 residues: Pyridoxal kinase PdxY (287 aa).

Substrate contacts are provided by residues serine 10 and 45-46; that span reads TQ. ATP-binding positions include aspartate 112, alanine 144, glutamate 149, lysine 182, and 209-212; that span reads RPLV. Substrate is bound at residue aspartate 224.

The protein belongs to the pyridoxine kinase family. PdxY subfamily. In terms of assembly, homodimer. Requires Mg(2+) as cofactor.

The enzyme catalyses pyridoxal + ATP = pyridoxal 5'-phosphate + ADP + H(+). It functions in the pathway cofactor metabolism; pyridoxal 5'-phosphate salvage; pyridoxal 5'-phosphate from pyridoxal: step 1/1. Its function is as follows. Pyridoxal kinase involved in the salvage pathway of pyridoxal 5'-phosphate (PLP). Catalyzes the phosphorylation of pyridoxal to PLP. This Shigella sonnei (strain Ss046) protein is Pyridoxal kinase PdxY.